The sequence spans 444 residues: ATP-dependent protease ATPase subunit HslU (444 aa).

ATP is bound by residues valine 18, 60-65, aspartate 258, glutamate 323, and arginine 395; that span reads GVGKTE.

This sequence belongs to the ClpX chaperone family. HslU subfamily. In terms of assembly, a double ring-shaped homohexamer of HslV is capped on each side by a ring-shaped HslU homohexamer. The assembly of the HslU/HslV complex is dependent on binding of ATP.

The protein localises to the cytoplasm. In terms of biological role, ATPase subunit of a proteasome-like degradation complex; this subunit has chaperone activity. The binding of ATP and its subsequent hydrolysis by HslU are essential for unfolding of protein substrates subsequently hydrolyzed by HslV. HslU recognizes the N-terminal part of its protein substrates and unfolds these before they are guided to HslV for hydrolysis. In Thioalkalivibrio sulfidiphilus (strain HL-EbGR7), this protein is ATP-dependent protease ATPase subunit HslU.